Here is a 562-residue protein sequence, read N- to C-terminus: TBC1 domain family member 24 (562 aa).

Residues lysine 36, arginine 40, lysine 238, arginine 242, and 293–297 (RLFSR) each bind a 1,2-diacyl-sn-glycero-3-phospho-(1D-myo-inositol). One can recognise a Rab-GAP TBC domain in the interval 42–259 (GHWAKSHTLR…FFHKVRGGQP (218 aa)). In terms of domain architecture, TLDc spans 337–549 (EIVSVKEMRD…ISIIEVWGFK (213 aa)). Residues 450–471 (NSSSADKEANSSQSDKDGIDPS) form a disordered region. Positions 454-468 (ADKEANSSQSDKDGI) are enriched in basic and acidic residues.

As to quaternary structure, interacts with ARF6.

The protein resides in the cell membrane. It localises to the cytoplasm. Its subcellular location is the cytoplasmic vesicle membrane. It is found in the presynapse. Its function is as follows. May act as a GTPase-activating protein for Rab family protein(s). Involved in neuronal projections development, probably through a negative modulation of ARF6 function. Involved in the regulation of synaptic vesicle trafficking. This is TBC1 domain family member 24 (tbc1d24) from Xenopus laevis (African clawed frog).